Consider the following 309-residue polypeptide: tRNA dimethylallyltransferase (309 aa).

10 to 17 is an ATP binding site; sequence GPTAVGKT. Position 12-17 (12-17) interacts with substrate; sequence TAVGKT. Residues 35–38 form an interaction with substrate tRNA region; it reads DSMQ.

The protein belongs to the IPP transferase family. As to quaternary structure, monomer. Mg(2+) is required as a cofactor.

The catalysed reaction is adenosine(37) in tRNA + dimethylallyl diphosphate = N(6)-dimethylallyladenosine(37) in tRNA + diphosphate. Functionally, catalyzes the transfer of a dimethylallyl group onto the adenine at position 37 in tRNAs that read codons beginning with uridine, leading to the formation of N6-(dimethylallyl)adenosine (i(6)A). This chain is tRNA dimethylallyltransferase, found in Clostridium botulinum (strain Alaska E43 / Type E3).